The chain runs to 125 residues: Ribosome-binding factor A (125 aa).

The protein belongs to the RbfA family. Monomer. Binds 30S ribosomal subunits, but not 50S ribosomal subunits or 70S ribosomes.

The protein resides in the cytoplasm. Its function is as follows. One of several proteins that assist in the late maturation steps of the functional core of the 30S ribosomal subunit. Associates with free 30S ribosomal subunits (but not with 30S subunits that are part of 70S ribosomes or polysomes). Required for efficient processing of 16S rRNA. May interact with the 5'-terminal helix region of 16S rRNA. The polypeptide is Ribosome-binding factor A (Thermosipho melanesiensis (strain DSM 12029 / CIP 104789 / BI429)).